The chain runs to 239 residues: Ribonuclease PH (239 aa).

Residues R86 and 124–126 each bind phosphate; that span reads GTR.

The protein belongs to the RNase PH family. Homohexameric ring arranged as a trimer of dimers.

It catalyses the reaction tRNA(n+1) + phosphate = tRNA(n) + a ribonucleoside 5'-diphosphate. Functionally, phosphorolytic 3'-5' exoribonuclease that plays an important role in tRNA 3'-end maturation. Removes nucleotide residues following the 3'-CCA terminus of tRNAs; can also add nucleotides to the ends of RNA molecules by using nucleoside diphosphates as substrates, but this may not be physiologically important. Probably plays a role in initiation of 16S rRNA degradation (leading to ribosome degradation) during starvation. The protein is Ribonuclease PH of Rhizobium leguminosarum bv. trifolii (strain WSM2304).